A 266-amino-acid chain; its full sequence is Translation initiation factor 2 subunit alpha (266 aa).

The S1 motif domain occupies 10–81 (GELVVGKIDE…SAQQIDLSIK (72 aa)). The interval 233 to 266 (AEDALEESADRAAKVVEQHGGSGQFHRERSEDDE) is disordered. Basic and acidic residues-rich tracts occupy residues 240-249 (SADRAAKVVE) and 257-266 (FHRERSEDDE).

Belongs to the eIF-2-alpha family. In terms of assembly, heterotrimer composed of an alpha, a beta and a gamma chain.

EIF-2 functions in the early steps of protein synthesis by forming a ternary complex with GTP and initiator tRNA. The protein is Translation initiation factor 2 subunit alpha of Haloarcula marismortui (strain ATCC 43049 / DSM 3752 / JCM 8966 / VKM B-1809) (Halobacterium marismortui).